Here is a 73-residue protein sequence, read N- to C-terminus: Antimicrobial peptide 6 (73 aa).

A signal peptide spans 1-22 (MQIKHLITLFFLVLIVADQCSA). Residues 45–73 (EISTQIDQYRNLQKREAELEELLDRLPMY) constitute a propeptide that is removed on maturation.

This sequence belongs to the non-disulfide-bridged peptide (NDBP) superfamily. Short antimicrobial peptide (group 4) family. In terms of tissue distribution, expressed by the venom gland.

The protein localises to the secreted. Its function is as follows. Antibacterial peptide. The sequence is that of Antimicrobial peptide 6 from Tityus costatus (Brazilian scorpion).